The chain runs to 152 residues: Deoxyuridine 5'-triphosphate nucleotidohydrolase (152 aa).

Substrate contacts are provided by residues 71–73, Asn84, 88–90, and Met98; these read RSG and LID.

This sequence belongs to the dUTPase family. Requires Mg(2+) as cofactor.

The enzyme catalyses dUTP + H2O = dUMP + diphosphate + H(+). Its pathway is pyrimidine metabolism; dUMP biosynthesis; dUMP from dCTP (dUTP route): step 2/2. Functionally, this enzyme is involved in nucleotide metabolism: it produces dUMP, the immediate precursor of thymidine nucleotides and it decreases the intracellular concentration of dUTP so that uracil cannot be incorporated into DNA. The chain is Deoxyuridine 5'-triphosphate nucleotidohydrolase from Shewanella denitrificans (strain OS217 / ATCC BAA-1090 / DSM 15013).